The chain runs to 355 residues: MSANQSPAGQPPTATYDSAFLKACRREPVPHTPVWFMRQAGRSLPEYLKVREGIPMLESCMRPELVAEITLQPVRRHGVDAAVYFSDIVVPLKAIGIDLDIKPGVGPVIAEPIRTRADLARLRDLTPEDVAYVTEAFGLLTRELGATPLIGFAGAPFTLASYLVEGGPSRNHEHTKALMYGDPQLWADLLDRLAGITAAFLKVQIEAGASAVQLFDSWVGALSPADYRRSVLPASRKVFEAVSGYGVPRIHFGVGTGELLGLLGEAGADVVGVDWRVPLDEAARRVGPGKALQGNLDPAVLFAGREAVETKTREVLDAATGLEGHVFNLGHGVLPTTDPDALTRLVEYVHTQTTR.

Substrate-binding positions include 38-42 (RQAGR), Asp-87, Tyr-162, Ser-217, and His-331.

This sequence belongs to the uroporphyrinogen decarboxylase family. As to quaternary structure, homodimer.

It is found in the cytoplasm. It carries out the reaction uroporphyrinogen III + 4 H(+) = coproporphyrinogen III + 4 CO2. It participates in porphyrin-containing compound metabolism; protoporphyrin-IX biosynthesis; coproporphyrinogen-III from 5-aminolevulinate: step 4/4. In terms of biological role, catalyzes the decarboxylation of four acetate groups of uroporphyrinogen-III to yield coproporphyrinogen-III. The polypeptide is Uroporphyrinogen decarboxylase (Streptomyces coelicolor (strain ATCC BAA-471 / A3(2) / M145)).